Consider the following 216-residue polypeptide: MGGKWSKHSVPGWSTVRERMRRAEPATDRVRQTEPAAVGVGAVSRDLEKHGAITSSNTAATNADCAWLEAYEDEEVGFPVRPQVPLRPMTYKAAIDLSHFLKEKGGLEGLIYSQKRQDILDLWIYHTQGYFPDWQNYTAGPGVRFPLTFGWCFKLVPVDPEKVEEANEGENNCLLHPMSQHGMDDPEKEVLVWKFDSKLALHHVARELHPEYYKDC.

The segment at Met1–Gln32 is disordered. Gly2 carries the N-myristoyl glycine; by host lipid modification. Residue Ser6 is modified to Phosphoserine; by host. The segment covering Val16–Gln32 has biased composition (basic and acidic residues). Residues Glu72 to Glu75 form an acidic; interacts with host PACS1 and PACS2; stabilizes the interaction of NEF/MHC-I with host AP1M1; necessary for MHC-I internalization region. Positions Pro79 to Pro88 are SH3-binding; interaction with Src family tyrosine kinases. Residues Pro82–Pro85 carry the PxxP; stabilizes the interaction of NEF/MHC-I with host AP1M1; necessary for MHC-I internalization motif. Residues Asp118–Trp134 form a mediates dimerization, Nef-PTE1 interaction region. Residues Val158–Val190 are binding to ATP6V1H. The Dileucine internalization motif; necessary for CD4 internalization signature appears at Leu174–Leu175. Residues Asp184–Asp185 carry the Diacidic; necessary for CD4 internalization motif.

It belongs to the lentivirus primate group Nef protein family. Monomer; cytosolic form. Homodimer; membrane bound form. Interacts with Nef associated p21-activated kinase (PAK2); this interaction activates PAK2. Associates with the Nef-MHC-I-AP1 complex; this complex is required for MHC-I internalization. Interacts (via C-terminus) with host PI3-kinase. Interacts with host PACS1; this interaction seems to be weak. Interacts with host PACS2. Interacts with host LCK and MAPK3; these interactions inhibit the kinase activity of the latter. Interacts with host ATP6V1H; this interaction may play a role in CD4 endocytosis. Associates with the CD4-Nef-AP2 complex; this complex is required for CD4 internalization. Interacts with host AP2 subunit alpha and AP2 subunit sigma2. Interacts with TCR-zeta chain; this interaction up-regulates the Fas ligand (FasL) surface expression. Interacts with host HCK, LYN, and SRC; these interactions activate the Src family kinases. Interacts with MAP3K5; this interaction inhibits the Fas and TNFR-mediated death signals. Interacts with beta-COP and PTE1. Interacts with human RACK1; this increases Nef phosphorylation by PKC. Interacts with TP53; this interaction decreases the half-life of TP53, protecting the infected cell against p53-mediated apoptosis. In terms of processing, the virion-associated Nef proteins are cleaved by the viral protease to release the soluble C-terminal core protein. Nef is probably cleaved concomitantly with viral structural proteins on maturation of virus particles. Myristoylated. Post-translationally, phosphorylated on serine residues, probably by host PKCdelta and theta.

The protein localises to the host cell membrane. It localises to the virion. It is found in the secreted. Its subcellular location is the host Golgi apparatus membrane. Factor of infectivity and pathogenicity, required for optimal virus replication. Alters numerous pathways of T-lymphocyte function and down-regulates immunity surface molecules in order to evade host defense and increase viral infectivity. Alters the functionality of other immunity cells, like dendritic cells, monocytes/macrophages and NK cells. Its function is as follows. In infected CD4(+) T-lymphocytes, down-regulates the surface MHC-I, mature MHC-II, CD4, CD28, CCR5 and CXCR4 molecules. Mediates internalization and degradation of host CD4 through the interaction of with the cytoplasmic tail of CD4, the recruitment of AP-2 (clathrin adapter protein complex 2), internalization through clathrin coated pits, and subsequent transport to endosomes and lysosomes for degradation. Diverts host MHC-I molecules to the trans-Golgi network-associated endosomal compartments by an endocytic pathway to finally target them for degradation. MHC-I down-regulation may involve AP-1 (clathrin adapter protein complex 1) or possibly Src family kinase-ZAP70/Syk-PI3K cascade recruited by PACS2. In consequence infected cells are masked for immune recognition by cytotoxic T-lymphocytes. Decreasing the number of immune receptors also prevents reinfection by more HIV particles (superinfection). Down-regulates host SERINC3 and SERINC5 thereby excluding these proteins from the viral particles. Virion infectivity is drastically higher when SERINC3 or SERINC5 are excluded from the viral envelope, because these host antiviral proteins impair the membrane fusion event necessary for subsequent virion penetration. Functionally, bypasses host T-cell signaling by inducing a transcriptional program nearly identical to that of anti-CD3 cell activation. Interaction with TCR-zeta chain up-regulates the Fas ligand (FasL). Increasing surface FasL molecules and decreasing surface MHC-I molecules on infected CD4(+) cells send attacking cytotoxic CD8+ T-lymphocytes into apoptosis. In terms of biological role, plays a role in optimizing the host cell environment for viral replication without causing cell death by apoptosis. Protects the infected cells from apoptosis in order to keep them alive until the next virus generation is ready to strike. Inhibits the Fas and TNFR-mediated death signals by blocking MAP3K5/ASK1. Decreases the half-life of TP53, protecting the infected cell against p53-mediated apoptosis. Inhibits the apoptotic signals regulated by the Bcl-2 family proteins through the formation of a Nef/PI3-kinase/PAK2 complex that leads to activation of PAK2 and induces phosphorylation of host BAD. Extracellular Nef protein targets CD4(+) T-lymphocytes for apoptosis by interacting with CXCR4 surface receptors. The protein is Protein Nef of Homo sapiens (Human).